The following is a 1808-amino-acid chain: Tenascin (1808 aa).

The signal sequence occupies residues 1–22; that stretch reads MGLPSQVLACAILGLLYQHASG. The propeptide occupies 23 to 33; it reads GLIKRIIRQKR. N-linked (GlcNAc...) asparagine glycosylation is present at Asn38. Ser72 is a glycosylation site (O-linked (Xyl...) (chondroitin sulfate) serine). A coiled-coil region spans residues 118-142; the sequence is DIKDLLSRLEELEGLVSSLREQCAS. N-linked (GlcNAc...) asparagine glycosylation is found at Asn168 and Asn186. The 13-residue stretch at 176 to 188 folds into the EGF-like 1; incomplete domain; that stretch reads CVCEPGWKGPNCS. 13 consecutive EGF-like domains span residues 188–219, 219–250, 250–281, 281–312, 312–343, 343–374, 374–405, 405–436, 436–467, 467–498, 498–529, 529–560, and 560–591; these read SEPACPRNCLNRGLCVRGKCICEEGFTGEDCS, SQAACPSDCNDQGKCVDGVCVCFEGYTGPDCG, GEELCPHGCGIHGRCVGGRCVCHEGFTGEDCN, NEPLCPNNCHNRGRCVDNECVCDEGYTGEDCG, GELICPNDCFDRGRCINGTCFCEEGYTGEDCG, GELTCPNNCNGNGRCENGLCVCHEGFVGDDCS, SQKRCPKDCNNRGHCVDGRCVCHEGYLGEDCG, GELRCPNDCHNRGRCINGQCVCDEGFIGEDCG, GELRCPNDCHNRGRCVNGQCECHEGFIGEDCG, GELRCPNDCNSHGRCVNGQCVCDEGYTGEDCG, GELRCPNDCHNRGRCVEGRCVCDNGFMGEDCG, GELSCPNDCHQHGRCVDGRCVCHEGFTGEDCR, and RERSCPNDCNNVGRCVEGRCVCEEGYMGIDCS. 39 cysteine pairs are disulfide-bonded: Cys192–Cys202, Cys196–Cys207, Cys209–Cys218, Cys223–Cys233, Cys227–Cys238, Cys240–Cys249, Cys254–Cys264, Cys258–Cys269, Cys271–Cys280, Cys285–Cys295, Cys289–Cys300, Cys302–Cys311, Cys316–Cys326, Cys320–Cys331, Cys333–Cys342, Cys347–Cys357, Cys351–Cys362, Cys364–Cys373, Cys378–Cys388, Cys382–Cys393, Cys395–Cys404, Cys409–Cys419, Cys413–Cys424, Cys426–Cys435, Cys440–Cys450, Cys444–Cys455, Cys457–Cys466, Cys471–Cys481, Cys475–Cys486, Cys488–Cys497, Cys502–Cys512, Cys506–Cys517, Cys519–Cys528, Cys533–Cys543, Cys537–Cys548, Cys550–Cys559, Cys564–Cys574, Cys568–Cys579, and Cys581–Cys590. N-linked (GlcNAc...) asparagine glycosylation occurs at Asn328. 11 Fibronectin type-III domains span residues 595-685, 686-775, 776-866, 867-957, 958-1046, 1047-1138, 1139-1228, 1229-1318, 1319-1408, 1409-1495, and 1496-1584; these read PPTE…LPAP, EGLK…TKLD, APSQ…DLDA, PRNL…TDLD, NPKD…EEEP, ELGN…AHPE, VGEL…EAEP, EVDN…TVVG, SPKG…ALDS, PSGL…TGLD, and APKD…TGLL. Residues Asn603, Asn643, Asn751, and Asn759 are each glycosylated (N-linked (GlcNAc...) asparagine). Asn1050, Asn1090, Asn1101, Asn1112, Asn1153, and Asn1183 each carry an N-linked (GlcNAc...) asparagine glycan. An N-linked (GlcNAc...) asparagine glycan is attached at Asn1416. The region spanning 1582–1797 is the Fibrinogen C-terminal domain; it reads GLLYPYPKDC…FAEMKLRPSS (216 aa). 2 N-linked (GlcNAc...) asparagine glycosylation sites follow: Asn1736 and Asn1769.

This sequence belongs to the tenascin family. As to quaternary structure, homohexamer; disulfide-linked. A homotrimer may be formed in the triple coiled-coil region and may be stabilized by disulfide rings at both ends. Two of such half-hexabrachions may be disulfide linked within the central globule. Interacts with CSPG5. In terms of tissue distribution, expressed in the brain.

The protein localises to the secreted. Its subcellular location is the extracellular space. The protein resides in the extracellular matrix. Extracellular matrix protein implicated in guidance of migrating neurons as well as axons during development, synaptic plasticity as well as neuronal regeneration. Ligand for integrins alpha-8/beta-1, alpha-9/beta-1, alpha-V/beta-3 and alpha-V/beta-6. The polypeptide is Tenascin (TNC) (Gallus gallus (Chicken)).